We begin with the raw amino-acid sequence, 89 residues long: Small ribosomal subunit protein uS15 (89 aa).

This sequence belongs to the universal ribosomal protein uS15 family. Part of the 30S ribosomal subunit. Forms a bridge to the 50S subunit in the 70S ribosome, contacting the 23S rRNA.

In terms of biological role, one of the primary rRNA binding proteins, it binds directly to 16S rRNA where it helps nucleate assembly of the platform of the 30S subunit by binding and bridging several RNA helices of the 16S rRNA. Its function is as follows. Forms an intersubunit bridge (bridge B4) with the 23S rRNA of the 50S subunit in the ribosome. The chain is Small ribosomal subunit protein uS15 from Levilactobacillus brevis (strain ATCC 367 / BCRC 12310 / CIP 105137 / JCM 1170 / LMG 11437 / NCIMB 947 / NCTC 947) (Lactobacillus brevis).